A 152-amino-acid polypeptide reads, in one-letter code: Superoxide dismutase [Cu-Zn] (152 aa).

Cu cation is bound by residues H45, H47, and H62. A disulfide bridge connects residues C56 and C145. The Zn(2+) site is built by H62, H70, H79, and D82. H119 provides a ligand contact to Cu cation.

Belongs to the Cu-Zn superoxide dismutase family. In terms of assembly, homodimer. Cu cation serves as cofactor. It depends on Zn(2+) as a cofactor.

The protein resides in the cytoplasm. It carries out the reaction 2 superoxide + 2 H(+) = H2O2 + O2. In terms of biological role, destroys radicals which are normally produced within the cells and which are toxic to biological systems. The protein is Superoxide dismutase [Cu-Zn] (SODCC) of Paulownia kawakamii (Dragon tree).